A 215-amino-acid polypeptide reads, in one-letter code: Endoplasmic reticulum vesicle protein 25 (215 aa).

Residues 1 to 21 (MQSLITYIALVFSLFVSSAIG) form the signal peptide. At 22 to 184 (LHLEVPALPN…TNESTNSRVK (163 aa)) the chain is on the lumenal side. Residues 34-125 (PVCIRDFVQE…VRSVELDIES (92 aa)) form the GOLD domain. Residues 185–205 (WFSIVVIASLVGFGVWQIQYL) traverse the membrane as a helical segment. Over 206-215 (RHYFKVKHII) the chain is Cytoplasmic.

Belongs to the EMP24/GP25L family.

The protein localises to the endoplasmic reticulum membrane. Its subcellular location is the golgi apparatus membrane. In terms of biological role, constituent of COPII-coated endoplasmic reticulum-derived transport vesicles. Required for efficient transport of a subset of secretory proteins to the Golgi. Facilitates retrograde transport from the Golgi to the endoplasmic reticulum. The protein is Endoplasmic reticulum vesicle protein 25 (ERV25) of Candida albicans (strain SC5314 / ATCC MYA-2876) (Yeast).